A 659-amino-acid polypeptide reads, in one-letter code: mRNA export factor ICP27 homolog (659 aa).

Positions 130, 266, 268, and 273 each coordinate Zn(2+). Residues 130–273 (CMMSNGERPP…CEHACNDNAC (144 aa)) form a CHC2-type zinc finger. The segment at 317-659 (GSFDDSRSAT…GEDGESDMTL (343 aa)) is disordered. The segment covering 324 to 336 (SATSGDGSSCSSA) has biased composition (low complexity). The span at 354–365 (SDQTDTSNNGTV) shows a compositional bias: polar residues. The span at 387–397 (SPLDRPNDYHY) shows a compositional bias: basic and acidic residues. Low complexity predominate over residues 413 to 427 (GSGSSSTEAVSTASA). Residues 483 to 499 (SPERRSSEERSSSDQRR) show a composition bias toward basic and acidic residues. A compositionally biased stretch (polar residues) spans 503–513 (LSRSASATSGG). The span at 553–575 (SRSNTPPSSPSKPDSAPAASASP) shows a compositional bias: low complexity. Residues 598–610 (ESVRVSERFETGD) are compositionally biased toward basic and acidic residues. Acidic residues-rich tracts occupy residues 617-628 (ETEDESDDEDDQ) and 646-659 (SETDGEDGESDMTL).

Belongs to the HHV-1 ICP27 protein family.

It is found in the virion tegument. It localises to the virion. Its subcellular location is the host nucleus. The protein resides in the host cytoplasm. Functionally, immediate early (EI) protein that plays many roles during productive infection including regulation of viral gene expression and nuclear export of intronless viral RNAs. The sequence is that of mRNA export factor ICP27 homolog from Elephantid herpesvirus 1 (isolate Asian elephant/Berlin/Kiba/1998) (EIHV-1).